The following is a 79-amino-acid chain: Cytochrome c-551 (79 aa).

Positions 1–14 (DGQSIYESGTSPTC) are enriched in polar residues. Residues 1–35 (DGQSIYESGTSPTCASCHDRGTAGAPKINEPGDWD) form a disordered region. Heme c contacts are provided by Cys14, Cys17, His18, and Met55.

Post-translationally, binds 1 heme c group covalently per subunit.

The polypeptide is Cytochrome c-551 (Halorhodospira halochloris (Ectothiorhodospira halochloris)).